A 500-amino-acid chain; its full sequence is NAD(P)H-quinone oxidoreductase chain 4, chloroplastic (500 aa).

Transmembrane regions (helical) follow at residues 4–24 (FPWLTIIVVFPISAGSLMLFL), 35–55 (YTICICILELLLTTYAFCYNF), 87–107 (IGTILLTGFITTLATLAAFPV), 113–130 (LFHFLMLAMYSGQIGSFS), 134–154 (LLLFFIMWELELIPVYLLLSM), 167–187 (FILYTAGSSIFLLIGVLGISL), 211–231 (ILFYIGFLIAFAVKSPIIPLH), 242–262 (HYSTCMLLAGILLKMGAYGLV), 272–292 (AHSMFSPWLMVVGTIQIIYAA), 305–325 (IAYSSVSHMGFIIIGISSITD), 330–350 (GAILQIISHGFIGAALFFLAG), 386–406 (LALPGMSGFVAELIVFFGIIT), 416–436 (ILIIFVMAIGMILTPIYLLSM), and 462–482 (LFLSISILLPIIGIGIYPDFV).

The protein belongs to the complex I subunit 4 family.

The protein localises to the plastid. It is found in the chloroplast thylakoid membrane. It catalyses the reaction a plastoquinone + NADH + (n+1) H(+)(in) = a plastoquinol + NAD(+) + n H(+)(out). It carries out the reaction a plastoquinone + NADPH + (n+1) H(+)(in) = a plastoquinol + NADP(+) + n H(+)(out). The chain is NAD(P)H-quinone oxidoreductase chain 4, chloroplastic from Nasturtium officinale (Watercress).